Here is a 472-residue protein sequence, read N- to C-terminus: Glutamate--tRNA ligase (472 aa).

Positions 10-20 (PSPTGYLHVGG) match the 'HIGH' region motif. 4 residues coordinate Zn(2+): Cys99, Cys101, Cys126, and His128. Residues 238-242 (KLSKR) carry the 'KMSKS' region motif. Residue Lys241 coordinates ATP.

Belongs to the class-I aminoacyl-tRNA synthetase family. Glutamate--tRNA ligase type 1 subfamily. In terms of assembly, monomer. Zn(2+) serves as cofactor.

The protein resides in the cytoplasm. The catalysed reaction is tRNA(Glu) + L-glutamate + ATP = L-glutamyl-tRNA(Glu) + AMP + diphosphate. Catalyzes the attachment of glutamate to tRNA(Glu) in a two-step reaction: glutamate is first activated by ATP to form Glu-AMP and then transferred to the acceptor end of tRNA(Glu). The chain is Glutamate--tRNA ligase from Proteus mirabilis (strain HI4320).